Reading from the N-terminus, the 283-residue chain is Dihydropteroate synthase (283 aa).

Residues 18-274 (PKIMGIVNLT…DVKATADALK (257 aa)) form the Pterin-binding domain. Asn-25 serves as a coordination point for Mg(2+). (7,8-dihydropterin-6-yl)methyl diphosphate contacts are provided by residues Thr-66, Asp-99, Asn-119, Asp-190, Lys-227, and 262–264 (RVH).

The protein belongs to the DHPS family. Homodimer. It depends on Mg(2+) as a cofactor.

It catalyses the reaction (7,8-dihydropterin-6-yl)methyl diphosphate + 4-aminobenzoate = 7,8-dihydropteroate + diphosphate. Its pathway is cofactor biosynthesis; tetrahydrofolate biosynthesis; 7,8-dihydrofolate from 2-amino-4-hydroxy-6-hydroxymethyl-7,8-dihydropteridine diphosphate and 4-aminobenzoate: step 1/2. Functionally, catalyzes the condensation of para-aminobenzoate (pABA) with 6-hydroxymethyl-7,8-dihydropterin diphosphate (DHPt-PP) to form 7,8-dihydropteroate (H2Pte), the immediate precursor of folate derivatives. The chain is Dihydropteroate synthase (folP) from Neisseria meningitidis serogroup C.